Reading from the N-terminus, the 371-residue chain is Neuropeptide S receptor (371 aa).

Over residues 1–21 (MPANFTEGSFDSSGTGQTLDS) the composition is skewed to polar residues. Positions 1–22 (MPANFTEGSFDSSGTGQTLDSS) are disordered. Over 1 to 52 (MPANFTEGSFDSSGTGQTLDSSPVACTETVTFTEVVEGKEWGSFYYSFKTEQ) the chain is Extracellular. A glycan (N-linked (GlcNAc...) asparagine) is linked at Asn-4. A helical membrane pass occupies residues 53-73 (LITLWVLFVFTIVGNSVVLFS). The Cytoplasmic segment spans residues 74 to 82 (TWRRKKKSR). Residues 83–103 (MTFFVTQLAITDSFTGLVNIL) traverse the membrane as a helical segment. Topologically, residues 104–123 (TDINWRFTGDFTAPDLVCRV) are extracellular. Residues Cys-121 and Cys-197 are joined by a disulfide bond. Residues 124-144 (VRYLQVVLLYASTYVLVSLSI) form a helical membrane-spanning segment. The Cytoplasmic segment spans residues 145–164 (DRYHAIVYPMKFLQGEKQAR). Residues 165-185 (VLIVIAWSLSFLFSIPTLIIF) form a helical membrane-spanning segment. Residues 186–212 (GKRTLSNGEVQCWALWPDDSYWTPYMT) lie on the Extracellular side of the membrane. The helical transmembrane segment at 213-233 (IVAFLVYFIPLTIISIMYGIV) threads the bilayer. Residues 234-275 (IRTIWIKSKTYETVISNCSDGKLCSSYNRGLISKAKIKAIKY) lie on the Cytoplasmic side of the membrane. Residues 276–296 (SIIIILAFICCWSPYFLFDIL) form a helical membrane-spanning segment. The Extracellular portion of the chain corresponds to 297–312 (DNFNLLPDTQERFYAS). Residues 313–333 (VIIQNLPALNSAINPLIYCVF) traverse the membrane as a helical segment. The Cytoplasmic segment spans residues 334–371 (SSSISFPCREQRSQDSRMTFRERTERHEMQILSKPEFI).

The protein belongs to the G-protein coupled receptor 1 family. Vasopressin/oxytocin receptor subfamily. In terms of tissue distribution, isoform 4 is ubiquitous; it is detected in glandular epithelia of bronchus, stomach, small intestine, colon, uterus, esophagus, spleen, kidney, pancreas, prostate and breast. Isoform 1 is detected in uterus, colon and prostate, and in the smooth muscle cell layer in bronchial and arterial walls (at protein level). Isoform 1 is predominantly expressed in smooth muscle. Isoform 4 is predominantly expressed in epithelial cells. In bronchial biopsies, it is expressed in smooth muscle cells of asthma patients, but not in control patients; whereas in epithelial cells, its expression is consistently stronger in asthma patients.

Its subcellular location is the cell membrane. It localises to the cytoplasm. Its function is as follows. G-protein coupled receptor for neuropeptide S (NPS). Promotes mobilization of intracellular Ca(2+) stores. Inhibits cell growth in response to NPS binding. Involved in pathogenesis of asthma and other IgE-mediated diseases. The polypeptide is Neuropeptide S receptor (NPSR1) (Homo sapiens (Human)).